The chain runs to 416 residues: MLRMAPKTVGAVRNLNIHEWQSKQLIQKYGGRAQSGEVAFSPERSRDIAKKLWNQFPGCKFVVKAQVLAGGRGKGHWEHGMQGGVKLAKTPEEVYEIANEMIGHKLITKQTGAKGINCNKVMVCGAVKILKEFYLSILLDRAMGCPVIIATSQGGMGIEEVAQKCPECLFKVPISVKNGPTNEQLVKLAKDLGLEGDLVQDCVDNVKALYQVFDKCDSTMVEINPLGVIETPTDEKVICCLDAKIAFDKDAAFRQKEIFALRDKSREDPRDVRASLADLNYVGLDGDIGCMVNGAGLAMATMDTINYFGGSAANFLDVGGNAKKEQITEALRILNSDKHVKSILINIFGGIMRCDVVAQGIMDAVREMKLDLPLVVRLEGTNVAKGKEILKSSGLNIIPANDLGDAAKKAVASLKH.

Residues 1 to 14 (MLRMAPKTVGAVRN) constitute a hydrogenosome transit peptide. Residues lysine 64, 71–73 (GRG), and glutamate 132 each bind ATP. 2 residues coordinate Mg(2+): asparagine 224 and aspartate 242. Substrate-binding positions include asparagine 293 and 350 to 352 (GIM).

This sequence belongs to the succinate/malate CoA ligase beta subunit family. In terms of assembly, heterodimer of an alpha and a beta subunit. Mg(2+) is required as a cofactor.

It localises to the hydrogenosome. The enzyme catalyses succinate + ATP + CoA = succinyl-CoA + ADP + phosphate. It functions in the pathway carbohydrate metabolism; tricarboxylic acid cycle; succinate from succinyl-CoA (ligase route): step 1/1. In terms of biological role, succinyl-CoA synthetase functions in the citric acid cycle (TCA), coupling the hydrolysis of succinyl-CoA to the synthesis of ATP and thus represents the only step of substrate-level phosphorylation in the TCA. The beta subunit provides nucleotide specificity of the enzyme and binds the substrate succinate, while the binding sites for coenzyme A and phosphate are found in the alpha subunit. The sequence is that of Succinate--CoA ligase [ADP-forming] subunit beta (SCSb) from Blastocystis sp. subtype 1 (strain ATCC 50177 / NandII).